A 288-amino-acid polypeptide reads, in one-letter code: Galactose/N-acetyl-D-galactosamine lectin light subunit 1 (288 aa).

The signal sequence occupies residues methionine 1–threonine 15. Residues asparagine 205 and asparagine 261 are each glycosylated (N-linked (GlcNAc...) asparagine).

As to quaternary structure, heterodimer composed of a 170 kDa heavy subunit (hgl) and a 31/35 kDa light subunit (lgl); disulfide-linked.

The protein localises to the cell membrane. Functionally, light subunit of a heterodimeric lectin; the heavy subunit binds galactose and N-acetyl-D-galactosamine of host glycoproteins and thus mediates adhesion to host cells. This Entamoeba histolytica (strain ATCC 30459 / HM-1:IMSS / ABRM) protein is Galactose/N-acetyl-D-galactosamine lectin light subunit 1.